Consider the following 77-residue polypeptide: U8-lycotoxin-Ls1n (77 aa).

An N-terminal signal peptide occupies residues methionine 1 to alanine 20. Positions glutamine 21–lysine 26 are excised as a propeptide.

The protein belongs to the neurotoxin 19 (CSTX) family. 08 (U8-Lctx) subfamily. Post-translationally, contains 4 disulfide bonds. In terms of tissue distribution, expressed by the venom gland.

It is found in the secreted. In Lycosa singoriensis (Wolf spider), this protein is U8-lycotoxin-Ls1n.